The primary structure comprises 158 residues: UPF0311 protein CA_C3321 (158 aa).

Belongs to the UPF0311 family.

In Clostridium acetobutylicum (strain ATCC 824 / DSM 792 / JCM 1419 / IAM 19013 / LMG 5710 / NBRC 13948 / NRRL B-527 / VKM B-1787 / 2291 / W), this protein is UPF0311 protein CA_C3321.